The following is a 310-amino-acid chain: D-alanine--D-alanine ligase (310 aa).

The 202-residue stretch at K104–Q305 folds into the ATP-grasp domain. L135–T190 contacts ATP. Mg(2+) is bound by residues D259, E272, and N274.

This sequence belongs to the D-alanine--D-alanine ligase family. Mg(2+) is required as a cofactor. The cofactor is Mn(2+).

Its subcellular location is the cytoplasm. It catalyses the reaction 2 D-alanine + ATP = D-alanyl-D-alanine + ADP + phosphate + H(+). Its pathway is cell wall biogenesis; peptidoglycan biosynthesis. Its function is as follows. Cell wall formation. This is D-alanine--D-alanine ligase from Magnetococcus marinus (strain ATCC BAA-1437 / JCM 17883 / MC-1).